The primary structure comprises 218 residues: Sodium channel regulatory subunit beta-1 (218 aa).

Positions 1–18 are cleaved as a signal peptide; the sequence is MGTLLALVVGAVLVSSAW. Residues 19 to 157 are Extracellular-facing; the sequence is GGCVEVDSET…DKANRDMASI (139 aa). Disulfide bonds link Cys21/Cys43 and Cys40/Cys121. One can recognise an Ig-like C2-type domain in the interval 22–150; that stretch reads VEVDSETEAV…KIHLEVVDKA (129 aa). Asn93, Asn110, Asn114, and Asn135 each carry an N-linked (GlcNAc...) asparagine glycan. Residues 158–179 traverse the membrane as a helical segment; it reads VSEIMMYVLIVVLTIWLVAEMV. Residues 180-218 lie on the Cytoplasmic side of the membrane; sequence YCYKKIAAATEAAAQENASEYLAITSESKENCTGVQVAE.

It belongs to the sodium channel auxiliary subunit SCN1B (TC 8.A.17) family. As to quaternary structure, a voltage-gated sodium (Nav) channel consists of an ion-conducting pore-forming alpha subunit functional on its own that is regulated by one or more beta subunits. Interacts with SCN1A; regulatory subunit of SCN1A/Nav1.1. Interacts with SCN3A; regulatory subunit of SCN3A/Nav1.3. Interacts with SCN4A; regulatory subunit of SCN4A/Nav1.4. Interacts with SCN5A; regulatory subunit of SCN5A/Nav1.5. Interacts with SCN8A; regulatory subunit of SCN8A/Nav1.6. Interacts with SCN9A; regulatory subunit of SCN9A/Nav1.7. Interacts with SCN10A; regulatory subunit of SCN10A/Nav1.8. Interacts with NFASC. Interacts with TMEM65. In terms of tissue distribution, detected in brain (at protein level). Expressed in brain, heart, skeletal muscle and spinal cord.

It is found in the cell membrane. The protein resides in the perikaryon. It localises to the cell projection. The protein localises to the axon. Regulatory subunit of multiple voltage-gated sodium (Nav) channels directly mediating the depolarization of excitable membranes. Navs, also called VGSCs (voltage-gated sodium channels) or VDSCs (voltage-dependent sodium channels), operate by switching between closed and open conformations depending on the voltage difference across the membrane. In the open conformation they allow Na(+) ions to selectively pass through the pore, along their electrochemical gradient. The influx of Na+ ions provokes membrane depolarization, initiating the propagation of electrical signals throughout cells and tissues. The accessory beta subunits participate in localization and functional modulation of the Nav channels. Modulates the activity of SCN1A/Nav1.1, SCN2A/Nav1.2, SCN3A/Nav1.3, SCN4A/Nav1.4, SCN5A/Nav1.5, SCN8A/Nav1.6, SCN9A/Nav1.7 and SCN10A/Nav1.8. The polypeptide is Sodium channel regulatory subunit beta-1 (Rattus norvegicus (Rat)).